We begin with the raw amino-acid sequence, 92 residues long: Large ribosomal subunit protein eL37 (92 aa).

Positions 19, 22, 34, and 37 each coordinate Zn(2+). A C4-type zinc finger spans residues 19 to 37 (CRRCGRRSYHIQKSTCANC). A disordered region spans residues 50–92 (SEKAKRRKTTGSGRTAHLRDVHRRFKNGFQVGTPKGARGPENH).

This sequence belongs to the eukaryotic ribosomal protein eL37 family. Zn(2+) serves as cofactor.

In terms of biological role, binds to the 23S rRNA. The chain is Large ribosomal subunit protein eL37 (rpl37) from Emericella nidulans (strain FGSC A4 / ATCC 38163 / CBS 112.46 / NRRL 194 / M139) (Aspergillus nidulans).